The sequence spans 438 residues: Xaa-Pro dipeptidase 2 (438 aa).

Positions 242, 253, 333, 378, and 414 each coordinate Mn(2+).

The protein belongs to the peptidase M24B family. Bacterial-type prolidase subfamily. It depends on Mn(2+) as a cofactor.

The catalysed reaction is Xaa-L-Pro dipeptide + H2O = an L-alpha-amino acid + L-proline. Its function is as follows. Splits dipeptides with a prolyl residue in the C-terminal position. The chain is Xaa-Pro dipeptidase 2 from Idiomarina loihiensis (strain ATCC BAA-735 / DSM 15497 / L2-TR).